The following is a 197-amino-acid chain: Dephospho-CoA kinase (197 aa).

Positions 3 to 197 constitute a DPCK domain; that stretch reads IIGLTGGIAS…IEEIWAKRFP (195 aa). 11–16 contacts ATP; sequence ASGKST.

This sequence belongs to the CoaE family.

It is found in the cytoplasm. It carries out the reaction 3'-dephospho-CoA + ATP = ADP + CoA + H(+). It functions in the pathway cofactor biosynthesis; coenzyme A biosynthesis; CoA from (R)-pantothenate: step 5/5. Functionally, catalyzes the phosphorylation of the 3'-hydroxyl group of dephosphocoenzyme A to form coenzyme A. The polypeptide is Dephospho-CoA kinase (Geobacter sulfurreducens (strain ATCC 51573 / DSM 12127 / PCA)).